The chain runs to 464 residues: Glutamate decarboxylase beta (464 aa).

K275 bears the N6-(pyridoxal phosphate)lysine mark.

Belongs to the group II decarboxylase family. Pyridoxal 5'-phosphate is required as a cofactor.

It carries out the reaction L-glutamate + H(+) = 4-aminobutanoate + CO2. Converts internalized glutamate to GABA and increases the internal pH. Involved in glutamate-dependent acid resistance in gastric fluid. The protein is Glutamate decarboxylase beta (gadB) of Listeria monocytogenes serovar 1/2a (strain ATCC BAA-679 / EGD-e).